The chain runs to 484 residues: E-selectin (484 aa).

Residues 1–22 (MIASQFLSALPLVLLLLRESGA) form the signal peptide. One can recognise a C-type lectin domain in the interval 23–140 (WSYSASTETM…CSKKKLALCY (118 aa)). At 23–429 (WSYSASTETM…CEAPAESKIP (407 aa)) the chain is on the extracellular side. 14 disulfides stabilise this stretch: C41–C139, C112–C131, C144–C155, C149–C164, C166–C175, C181–C222, C194–C204, C208–C235, C240–C285, C271–C298, C303–C348, C334–C361, C366–C407, and C393–C420. N61, N65, and N79 each carry an N-linked (GlcNAc...) asparagine glycan. E102, N104, and E110 together coordinate Ca(2+). A carbohydrate-binding positions include 102-110 (EPNNKQSNE), 114-119 (EIYIKR), and 127-129 (NDE). Residues N127 and D128 each coordinate Ca(2+). Positions 141-176 (TAACTPTSCSGHGECIETINSSTCQCYPGFRGLQCE) constitute an EGF-like domain. N160 carries an N-linked (GlcNAc...) asparagine glycan. Sushi domains lie at 179-237 (VECD…TCKA), 251-300 (VSCN…VCKA), 301-363 (VKCP…SCQV), and 364-422 (VQCS…TCEA). N-linked (GlcNAc...) asparagine glycosylation occurs at N201. N254 is a glycosylation site (N-linked (GlcNAc...) asparagine). N376 and N400 each carry an N-linked (GlcNAc...) asparagine glycan. Residues 430 to 451 (LAMGLAAGGVSFMTSASFLLWL) traverse the membrane as a helical segment. Residues 452 to 484 (LKRLRKRAKKFVPSSSSECLQPNGSYQMPSDLI) are Cytoplasmic-facing.

Belongs to the selectin/LECAM family. As to quaternary structure, interacts with SELPLG/PSGL1 and PODXL2 through the sialyl Lewis X epitope. SELPLG sulfation appears not to be required for this interaction.

It localises to the cell membrane. In terms of biological role, cell-surface glycoprotein having a role in immunoadhesion. Mediates in the adhesion of blood neutrophils in cytokine-activated endothelium through interaction with SELPLG/PSGL1. May have a role in capillary morphogenesis. This Sus scrofa (Pig) protein is E-selectin (SELE).